We begin with the raw amino-acid sequence, 95 residues long: MSEPVNKVKQTQQQVDDVTNTMHIAVGKMLDNQQKVSELTDKSENMKQGAQQFKKKTNEIKRLMWCRNIKLTLIIIAVVVLLLVVIIVPIVLKFT.

At 1–70 (MSEPVNKVKQ…KRLMWCRNIK (70 aa)) the chain is on the cytoplasmic side. The v-SNARE coiled-coil homology domain occupies 7–67 (KVKQTQQQVD…NEIKRLMWCR (61 aa)). A helical; Anchor for type IV membrane protein membrane pass occupies residues 71–91 (LTLIIIAVVVLLLVVIIVPIV). Topologically, residues 92–95 (LKFT) are vesicular.

Belongs to the synaptobrevin family.

The protein resides in the cytoplasmic vesicle. Its subcellular location is the secretory vesicle membrane. Functionally, involved in the targeting and/or fusion of transport vesicles to their target membrane. The protein is Synaptobrevin-A (sybA) of Dictyostelium discoideum (Social amoeba).